Here is a 404-residue protein sequence, read N- to C-terminus: Cystinosin homolog (404 aa).

At 20–123 (TNNLVVRQKE…FARITVIRSH (104 aa)) the chain is on the lumenal side. N-linked (GlcNAc...) asparagine glycans are attached at residues Asn46, Asn53, Asn79, and Asn97. The helical transmembrane segment at 124–144 (FLAILIQIVGWTYFFAWSISF) threads the bilayer. The region spanning 125-191 (LAILIQIVGW…MYYNSHVKNE (67 aa)) is the PQ-loop 1 domain. At 145-163 (YPQMYLNFKRKSVVGLNFD) the chain is on the cytoplasmic side. A helical membrane pass occupies residues 164-184 (FLSLNLVGFCAYAIFNLLMYY). The Lumenal segment spans residues 185-207 (NSHVKNEYNIVNPRSPPPVLLND). The helical transmembrane segment at 208–228 (VVFAVHAFLACFITILQCLFY) threads the bilayer. Residues 229–238 (ERDNQSVSSK) are Cytoplasmic-facing. Residues 239 to 259 (CIALMIVLISFGFCSAAATVL) form a helical membrane-spanning segment. The Lumenal portion of the chain corresponds to 260-263 (RKIQ). Residues 264–285 (LLSFVTSLSYIKMAVTCCKYFP) traverse the membrane as a helical segment. Positions 266-327 (SFVTSLSYIK…MILQAVNVND (62 aa)) constitute a PQ-loop 2 domain. Residues 286–295 (QAYFNYTRKS) are Cytoplasmic-facing. Residues 296 to 316 (TVGWSIGNIMLDFTGGTLDIL) traverse the membrane as a helical segment. Residues 317–337 (QMILQAVNVNDWSAFYANPVK) are Lumenal-facing. A helical membrane pass occupies residues 338–358 (FGLGFVSIFFDIIFMVQHYVL). Topologically, residues 359–404 (YPNAEVPHNEYHGVDNPNPDNIARDAEQYAGDSESMESTEPIIVHD) are cytoplasmic.

This sequence belongs to the cystinosin family.

The protein resides in the lysosome membrane. Its subcellular location is the cytoplasmic vesicle. The protein localises to the phagosome. The enzyme catalyses L-cystine(out) + H(+)(out) = L-cystine(in) + H(+)(in). Cystine/H(+) symporter that mediates export of cystine, the oxidized dimer of cysteine, from lysosomes. May play a role in the degradation of engulfed apoptotic cells. This chain is Cystinosin homolog (ctns-1), found in Caenorhabditis elegans.